The sequence spans 346 residues: D-alanine--D-alanine ligase (346 aa).

One can recognise an ATP-grasp domain in the interval 133–326; it reads KFLAQKAGVK…LANSLPKERE (194 aa). 159-209 is a binding site for ATP; that stretch reads YPIILKPARLGSSIGVSVVHDDSELAYAKDVAFEFDKDVLVEPFIKGVKEY. Mg(2+) contacts are provided by aspartate 282, glutamate 294, and asparagine 296.

It belongs to the D-alanine--D-alanine ligase family. It depends on Mg(2+) as a cofactor. The cofactor is Mn(2+).

The protein localises to the cytoplasm. It carries out the reaction 2 D-alanine + ATP = D-alanyl-D-alanine + ADP + phosphate + H(+). The protein operates within cell wall biogenesis; peptidoglycan biosynthesis. Cell wall formation. This is D-alanine--D-alanine ligase from Campylobacter concisus (strain 13826).